A 285-amino-acid chain; its full sequence is Eukaryotic translation initiation factor 3 subunit F-2 (285 aa).

Residues 11 to 145 (VVLQPLVLFQ…TRLYCGVEMG (135 aa)) enclose the MPN domain.

It belongs to the eIF-3 subunit F family. As to quaternary structure, component of the eukaryotic translation initiation factor 3 (eIF-3) complex. The eIF-3 complex interacts with pix.

The protein resides in the cytoplasm. Component of the eukaryotic translation initiation factor 3 (eIF-3) complex, which is involved in protein synthesis of a specialized repertoire of mRNAs and, together with other initiation factors, stimulates binding of mRNA and methionyl-tRNAi to the 40S ribosome. The eIF-3 complex specifically targets and initiates translation of a subset of mRNAs involved in cell proliferation. The polypeptide is Eukaryotic translation initiation factor 3 subunit F-2 (Drosophila ananassae (Fruit fly)).